A 463-amino-acid chain; its full sequence is L-seryl-tRNA(Sec) selenium transferase (463 aa).

Lysine 295 is subject to N6-(pyridoxal phosphate)lysine.

The protein belongs to the SelA family. As to quaternary structure, homodecamer; pentamer of dimers. Binds only one seryl-tRNA(Sec) per dimer. It depends on pyridoxal 5'-phosphate as a cofactor.

The protein localises to the cytoplasm. The catalysed reaction is L-seryl-tRNA(Sec) + selenophosphate + H(+) = L-selenocysteinyl-tRNA(Sec) + phosphate. The protein operates within aminoacyl-tRNA biosynthesis; selenocysteinyl-tRNA(Sec) biosynthesis; selenocysteinyl-tRNA(Sec) from L-seryl-tRNA(Sec) (bacterial route): step 1/1. Functionally, converts seryl-tRNA(Sec) to selenocysteinyl-tRNA(Sec) required for selenoprotein biosynthesis. This chain is L-seryl-tRNA(Sec) selenium transferase, found in Shigella flexneri.